Here is a 443-residue protein sequence, read N- to C-terminus: MAKFEDKVDLYDDRGNLVEEQVPLEALSPLRNPAIKSIVQGIKRTVAVNLEGIENALKTAKVGGPACKIMGRELDLDIVGNAESIAAAAKEMIQVTEDDDTKVELLGGGKRALVQVPSARFDVAAEYSAAPLVTATAFVQAIINEFDVSMYDANMVKAAVLGRYPQSVEYMGANIATMLDIPQKLEGPGYALRNIMVNHVVAATLKNTLQAAALSTILEQTAMFEMGDAVGAFERMHLLGLAYQGMNADNLVFDLVKANGKEGTVGSVIADLVERALEDGVIKVEKELTDYKVYGTDDLAMWNAYAAAGLMAATMVNQGAARAAQGVSSTLLYYNDLIEFETGLPGVDFGKVEGTAVGFSFFSHSIYGGGGPGIFNGNHIVTRHSKGFAIPCVAAAMALDAGTQMFSPEATSGLIKEVFSQVDEFREPLKYVVEAAAEIKNEI.

Tyr-367 contributes to the coenzyme M binding site. Gly-369 contacts coenzyme B.

It belongs to the methyl-coenzyme M reductase beta subunit family. As to quaternary structure, MCR is a hexamer of two alpha, two beta, and two gamma chains, forming a dimer of heterotrimers. Coenzyme F430 serves as cofactor.

It localises to the cytoplasm. It carries out the reaction coenzyme B + methyl-coenzyme M = methane + coenzyme M-coenzyme B heterodisulfide. Its pathway is one-carbon metabolism; methyl-coenzyme M reduction; methane from methyl-coenzyme M: step 1/1. In terms of biological role, component of the methyl-coenzyme M reductase (MCR) I that catalyzes the reductive cleavage of methyl-coenzyme M (CoM-S-CH3 or 2-(methylthio)ethanesulfonate) using coenzyme B (CoB or 7-mercaptoheptanoylthreonine phosphate) as reductant which results in the production of methane and the mixed heterodisulfide of CoB and CoM (CoM-S-S-CoB). This is the final step in methanogenesis. The polypeptide is Methyl-coenzyme M reductase I subunit beta (mcrB) (Methanothermobacter thermautotrophicus (strain ATCC 29096 / DSM 1053 / JCM 10044 / NBRC 100330 / Delta H) (Methanobacterium thermoautotrophicum)).